A 78-amino-acid chain; its full sequence is uncharacterized protein (78 aa).

A disordered region spans residues 20 to 78 (LQDLFPPHFGNEEADEDDEDGDKYGDDDGEFYGDNDGDNDGDNDGVNDGVGDGPPSTLL). The span at 31–64 (EEADEDDEDGDKYGDDDGEFYGDNDGDNDGDNDG) shows a compositional bias: acidic residues.

This is an uncharacterized protein from Dictyostelium discoideum (Social amoeba).